The sequence spans 82 residues: uncharacterized protein (82 aa).

The next 2 membrane-spanning stretches (helical) occupy residues 29 to 49 (LMNA…GIII) and 55 to 75 (WSLP…LTFF).

The protein localises to the cell membrane. This is an uncharacterized protein from Escherichia coli (strain K12).